Consider the following 1188-residue polypeptide: Integrin alpha-11 (1188 aa).

The N-terminal stretch at 1-22 (MDLPRGLVVAWALSLWPGFTDT) is a signal peptide. Residues 23 to 1141 (FNMDTRKPRV…ISKQEDWQVP (1119 aa)) are Extracellular-facing. FG-GAP repeat units lie at residues 24-85 (NMDT…NCTK) and 91-151 (VTLS…FSKT). The cysteines at positions 76 and 83 are disulfide-linked. Residues Asn-82 and Asn-95 are each glycosylated (N-linked (GlcNAc...) asparagine). 2 cysteine pairs are disulfide-bonded: Cys-121–Cys-139 and Cys-129–Cys-159. Residues 164–345 (DIVIVLDGSN…AALKDIVDAL (182 aa)) enclose the VWFA domain. Asn-291, Asn-331, Asn-358, Asn-449, and Asn-462 each carry an N-linked (GlcNAc...) asparagine glycan. 5 FG-GAP repeats span residues 355–406 (TNKN…VIPL), 411–461 (LKEF…TMHN), 462–527 (NRSL…LFVY), 528–586 (NGTL…SILK), and 590–650 (QRIT…FEPS). Residues Asp-488, Asp-490, Asp-492, and Asp-496 each coordinate Ca(2+). Residue Asn-528 is glycosylated (N-linked (GlcNAc...) asparagine). Residues Asp-551, Asn-553, Asp-555, Asp-559, Asp-613, Asn-615, Asp-617, and Asp-621 each coordinate Ca(2+). Residue Asn-642 is glycosylated (N-linked (GlcNAc...) asparagine). 3 disulfides stabilise this stretch: Cys-659–Cys-668, Cys-674–Cys-729, and Cys-781–Cys-787. Asn-694 carries N-linked (GlcNAc...) asparagine glycosylation. The N-linked (GlcNAc...) asparagine glycan is linked to Asn-857. Cys-881 and Cys-893 are joined by a disulfide. Residues Asn-894, Asn-973, Asn-1031, Asn-1039, and Asn-1059 are each glycosylated (N-linked (GlcNAc...) asparagine). Residues 1142–1164 (IWIIVGSTLGGLLLLALLVLALW) traverse the membrane as a helical segment. The Cytoplasmic portion of the chain corresponds to 1165–1188 (KLGFFRSARRRREPGLDPTPKVLE).

The protein belongs to the integrin alpha chain family. In terms of assembly, heterodimer of an alpha and a beta subunit. Alpha-11 associates with beta-1. Interacts with RAB21. According to PubMed:10464311, highest levels of expression in uterus and heart, intermediate levels in skeletal muscle and intermediate to low levels in pancreas, kidney and placenta. According to PubMed:10486209, also found in brain, colon, lung, small intestine, stomach, testis, salivary glands, thyroid glands and prostate. Very low levels in peripheral blood lymphocytes, fetal brain and fetal liver.

The protein resides in the membrane. In terms of biological role, integrin alpha-11/beta-1 is a receptor for collagen. The sequence is that of Integrin alpha-11 (ITGA11) from Homo sapiens (Human).